Here is a 647-residue protein sequence, read N- to C-terminus: DNA mismatch repair protein MutL (647 aa).

Residues 375-395 (KQEEPQAVKQPPQLWQPPKQE) form a disordered region. The span at 383–395 (KQPPQLWQPPKQE) shows a compositional bias: low complexity.

Belongs to the DNA mismatch repair MutL/HexB family.

Its function is as follows. This protein is involved in the repair of mismatches in DNA. It is required for dam-dependent methyl-directed DNA mismatch repair. May act as a 'molecular matchmaker', a protein that promotes the formation of a stable complex between two or more DNA-binding proteins in an ATP-dependent manner without itself being part of a final effector complex. This is DNA mismatch repair protein MutL from Bacillus cereus (strain B4264).